Reading from the N-terminus, the 323-residue chain is MADPGDRLGVLTTTRRVVEQAQAVWIDHDAVAQIAEAFAARQVTPPTWNRELHWSDGREALANYILVLDAVNFCFWGEPRWRIEYAGAVYDGYWALAASLKRALEQGVPLTDASYLAEITRDDVATIFAGEGEIPLLDERARILRETGSVLAERFAGRFSDAIAAAGRSAVALVDIVTNAFPSFRDVATYRGEQVRFYKRAQILVSDLYGAFDGSDLGAFDDLGELTAFADYKVPQVLHHLGILRYAPALHDRLARREEIPAGSPEEVEIRAATIWGVEELRRALASRGHALDAYQVDWLLWDEGQRLPAGTLPYHRTRTIFY.

Positions 72, 93, 199, 229, 231, 298, 302, and 306 each coordinate queuosine 5'-phosphate. Residue aspartate 231 is the Nucleophile or transition state stabilizer of the active site.

The protein belongs to the QNG1 protein family. In terms of assembly, monomer.

It carries out the reaction queuosine 5'-phosphate + H2O = queuine + D-ribose 5-phosphate. Its function is as follows. Catalyzes the hydrolysis of queuosine 5'-phosphate, releasing the nucleobase queuine (q). Is likely required for salvage of queuine from exogenous queuosine (Q) that is imported and then converted to queuosine 5'-phosphate intracellularly. In vitro, can also catalyze the release of the q base directly from Q as substrate; however, Q may not be the biologically relevant substrate. Shows a very low activity on queuosine 3',5'-diphosphate, and cannot release q from queuosine 3'-phosphate and from the 5'-nucleotides AMP, UMP, CMP or GMP, indicating specificity for the queuine base. This chain is Queuosine 5'-phosphate N-glycosylase/hydrolase, found in Sphaerobacter thermophilus (strain ATCC 49802 / DSM 20745 / KCCM 41009 / NCIMB 13125 / S 6022).